The chain runs to 673 residues: Cell division cycle protein 23 homolog (673 aa).

TPR repeat units lie at residues 86 to 120 (AEMW…VLDN), 159 to 195 (NKEF…YQEH), 232 to 267 (EDVW…EPRI), 332 to 365 (PMII…DPYR), 400 to 433 (WETC…NPGL), 434 to 467 (AALW…DPAD), 469 to 501 (RGWY…KPHD), 502 to 535 (SRLL…GDVE), 539 to 572 (LWSL…VTSA), and 577 to 610 (IYAI…ETLC). Positions 628 to 673 (SRLPVEEAPGPSNASAAGGQEAMDTEEAPQEGGEEEMSEGEDDFSF) are disordered. Residues 635-646 (APGPSNASAAGG) show a composition bias toward low complexity. Residues 650–673 (MDTEEAPQEGGEEEMSEGEDDFSF) are compositionally biased toward acidic residues.

This sequence belongs to the APC8/CDC23 family. In terms of assembly, the APC/C complex is probably composed of at least 12 subunits: apc-2, apc-10, apc-11, cdc-26, emb-1, emb-27, emb-30, mat-1, mat-2, mat-3, such-1 and gfi-3.

The protein operates within protein modification; protein ubiquitination. Functionally, probable component of the anaphase promoting complex/cyclosome (APC/C), a cell cycle-regulated E3 ubiquitin ligase that controls progression through mitosis and the G1 phase of the cell cycle. The APC/C complex acts by mediating ubiquitination and subsequent degradation of target proteins. Developmental role in early embryogenesis and the metaphase to anaphase transition in oocyte and spermatocyte meiosis and mitosis in germ cells. Required for embryonic anterior-posterior axis formation. Plays a role in regulating the abundance of glr-1 receptors in postmitotic neurons, which may in turn control animal locomotion. Involved in regulating GABA neurotransmitter release at neuromuscular junctions in GABA motor neurons. This Caenorhabditis elegans protein is Cell division cycle protein 23 homolog.